The primary structure comprises 219 residues: uncharacterized protein (219 aa).

This is an uncharacterized protein from Acanthamoeba polyphaga mimivirus (APMV).